We begin with the raw amino-acid sequence, 257 residues long: MIIVLSPAKSLDYDTPPRTKTHTLPDFIERSAELIDVLRKLSPAQIGTLMHISDPLAALNATRYADWSPEFTAENSKQAALAFDGDVYGGLDANSLAVDDLQFAQKHLRILSGLYGVLRPLDWMQPYRLEMGTRLANPRGKDLYAFWGDDVTLALNELFKQDDDAVLVNLASEEYFKVVRPKVLKARIVTPVFEDWKNGQYKIISFYAKRARGLMARYAIEHRITDPRKLKAFDVDGYAFAAADSDDERWVFRRKLT.

It belongs to the UPF0246 family.

This is UPF0246 protein Rpic_2164 from Ralstonia pickettii (strain 12J).